The primary structure comprises 111 residues: Translation initiation factor 1A (111 aa).

In terms of domain architecture, S1-like spans 11–83; the sequence is KKIRLPKEGE…ERADVTWRYT (73 aa).

This sequence belongs to the eIF-1A family.

Seems to be required for maximal rate of protein biosynthesis. Enhances ribosome dissociation into subunits and stabilizes the binding of the initiator Met-tRNA(I) to 40 S ribosomal subunits. The sequence is that of Translation initiation factor 1A (eIF1A) from Methanopyrus kandleri (strain AV19 / DSM 6324 / JCM 9639 / NBRC 100938).